The sequence spans 428 residues: Histidine--tRNA ligase (428 aa).

The protein belongs to the class-II aminoacyl-tRNA synthetase family. As to quaternary structure, homodimer.

It is found in the cytoplasm. It catalyses the reaction tRNA(His) + L-histidine + ATP = L-histidyl-tRNA(His) + AMP + diphosphate + H(+). The sequence is that of Histidine--tRNA ligase from Lactobacillus gasseri (strain ATCC 33323 / DSM 20243 / BCRC 14619 / CIP 102991 / JCM 1131 / KCTC 3163 / NCIMB 11718 / NCTC 13722 / AM63).